A 271-amino-acid chain; its full sequence is Glutamate racemase (271 aa).

Substrate is bound by residues 10–11 (DS) and 42–43 (YG). C74 serves as the catalytic Proton donor/acceptor. Residue 75-76 (NT) participates in substrate binding. C189 (proton donor/acceptor) is an active-site residue. 190-191 (TH) is a substrate binding site.

Belongs to the aspartate/glutamate racemases family.

It catalyses the reaction L-glutamate = D-glutamate. The protein operates within cell wall biogenesis; peptidoglycan biosynthesis. Provides the (R)-glutamate required for cell wall biosynthesis. In Bartonella bacilliformis (strain ATCC 35685 / KC583 / Herrer 020/F12,63), this protein is Glutamate racemase.